The primary structure comprises 282 residues: tRNA uridine(34) hydroxylase (282 aa).

One can recognise a Rhodanese domain in the interval 128–222; that stretch reads EGRPVVMLDT…YFEEVGGSHY (95 aa). Cys-182 functions as the Cysteine persulfide intermediate in the catalytic mechanism.

This sequence belongs to the TrhO family.

It carries out the reaction uridine(34) in tRNA + AH2 + O2 = 5-hydroxyuridine(34) in tRNA + A + H2O. In terms of biological role, catalyzes oxygen-dependent 5-hydroxyuridine (ho5U) modification at position 34 in tRNAs. This Cupriavidus taiwanensis (strain DSM 17343 / BCRC 17206 / CCUG 44338 / CIP 107171 / LMG 19424 / R1) (Ralstonia taiwanensis (strain LMG 19424)) protein is tRNA uridine(34) hydroxylase.